We begin with the raw amino-acid sequence, 255 residues long: 5'-nucleotidase SurE (255 aa).

The a divalent metal cation site is built by D8, D9, S40, and N92.

It belongs to the SurE nucleotidase family. Requires a divalent metal cation as cofactor.

It is found in the cytoplasm. It carries out the reaction a ribonucleoside 5'-phosphate + H2O = a ribonucleoside + phosphate. Nucleotidase that shows phosphatase activity on nucleoside 5'-monophosphates. In Brucella suis (strain ATCC 23445 / NCTC 10510), this protein is 5'-nucleotidase SurE.